Consider the following 231-residue polypeptide: 7-cyano-7-deazaguanine synthase (231 aa).

An ATP-binding site is contributed by Phe8–Leu18. The Zn(2+) site is built by Cys188, Cys197, Cys200, and Cys203.

Belongs to the QueC family. The cofactor is Zn(2+).

The catalysed reaction is 7-carboxy-7-deazaguanine + NH4(+) + ATP = 7-cyano-7-deazaguanine + ADP + phosphate + H2O + H(+). It functions in the pathway purine metabolism; 7-cyano-7-deazaguanine biosynthesis. Catalyzes the ATP-dependent conversion of 7-carboxy-7-deazaguanine (CDG) to 7-cyano-7-deazaguanine (preQ(0)). The chain is 7-cyano-7-deazaguanine synthase from Escherichia fergusonii (strain ATCC 35469 / DSM 13698 / CCUG 18766 / IAM 14443 / JCM 21226 / LMG 7866 / NBRC 102419 / NCTC 12128 / CDC 0568-73).